The chain runs to 233 residues: Ribonuclease 3 (233 aa).

In terms of domain architecture, RNase III spans 4–126 (LNKLMERLGH…IVGAIYIDAG (123 aa)). Glutamate 39 contacts Mg(2+). Aspartate 43 is a catalytic residue. Mg(2+) contacts are provided by aspartate 112 and glutamate 115. The active site involves glutamate 115. The region spanning 153 to 222 (DAKSLLQEWL…AKRFLELLDD (70 aa)) is the DRBM domain.

Belongs to the ribonuclease III family. In terms of assembly, homodimer. Mg(2+) serves as cofactor.

The protein resides in the cytoplasm. It carries out the reaction Endonucleolytic cleavage to 5'-phosphomonoester.. Functionally, digests double-stranded RNA. Involved in the processing of primary rRNA transcript to yield the immediate precursors to the large and small rRNAs (23S and 16S). Processes some mRNAs, and tRNAs when they are encoded in the rRNA operon. Processes pre-crRNA and tracrRNA of type II CRISPR loci if present in the organism. This chain is Ribonuclease 3, found in Coxiella burnetii (strain RSA 331 / Henzerling II).